The sequence spans 340 residues: MSGGFYSSPFWAGYLETQRSRLPVLPEIDDGLSHCVVRFLGYNPGSMQLQGTNTYLVGTGSTRILIDTGEGAPQWAVSVTRYLEDHDISISHVLLTHWHKDHTGGVADLLAHDPSIIVYKHAPDPGQQAIANGQTFKTQGATLRAVLTPGHAVDHMCFLLEEENALFTGDNVLGHGYSVAEDLETYTASLRLMAGLKCSVGYPGHGDAILNLPQTIARYISQRVAREKKIYAILALHACSCSSRNGGSTSSIGSVSESGDSDEEDNNMKTSRPAMQGLSTAEIGGLVYGESVKNSPTFDSAVGPLLNQVLYMLLEQGKCCDHVSILVIFQKPGFFSIPVI.

Residues histidine 97, histidine 99, aspartate 101, histidine 102, and histidine 205 each coordinate Zn(2+). Residue aspartate 101 is the Proton donor/acceptor of the active site. Residues 242-258 (SSRNGGSTSSIGSVSES) are compositionally biased toward low complexity. A disordered region spans residues 242-271 (SSRNGGSTSSIGSVSESGDSDEEDNNMKTS).

This sequence belongs to the metallo-beta-lactamase superfamily. Zn(2+) serves as cofactor.

It carries out the reaction 3,5,7,9,11,13-hexaoxotetradecanoyl-[ACP] = dehydrocitreoisocoumarin + holo-[ACP] + H2O. The catalysed reaction is 3,5,7,9,11-pentaoxododecanoyl-[ACP] = 6,8-dihydroxy-3-(2-oxopropyl)-isocoumarin + holo-[ACP] + H2O. In terms of biological role, thioesterase; part of the pkg gene cluster that mediates the biosynthesis of dihydrocitreoisocoumarin and 6,8-dihydroxy-3-(2-oxopropyl)-isocoumarin. The non-reducing polyketide synthase pkgA performs the condensation of one acetyl-CoA starter unit with 6 and 5 malonyl-CoA units, respectively. As pkgA lacks a releasing domain, the thioesterase pkgB is necessary to break the thioester bond and release dihydrocitreoisocoumarin and 6,8-dihydroxy-3-(2-oxopropyl)-isocoumarin from pkgA. In Emericella nidulans (strain FGSC A4 / ATCC 38163 / CBS 112.46 / NRRL 194 / M139) (Aspergillus nidulans), this protein is Thioesterase pkgB.